Consider the following 507-residue polypeptide: ATP synthase subunit alpha, chloroplastic (507 aa).

170–177 (GDRQTGKT) lines the ATP pocket. 3 disordered regions span residues 278–325 (PRRP…TQAG), 392–430 (EPEA…APLP), and 452–471 (GQVQ…NKPE). Over residues 282 to 303 (PGREAHPGDVPHLHPRPPERAA) the composition is skewed to basic and acidic residues. The span at 305-322 (LSSQPGEGSTTASPTVET) shows a compositional bias: polar residues.

This sequence belongs to the ATPase alpha/beta chains family. F-type ATPases have 2 components, CF(1) - the catalytic core - and CF(0) - the membrane proton channel. CF(1) has five subunits: alpha(3), beta(3), gamma(1), delta(1), epsilon(1). CF(0) has four main subunits: a, b, b' and c.

The protein resides in the plastid. Its subcellular location is the chloroplast thylakoid membrane. It catalyses the reaction ATP + H2O + 4 H(+)(in) = ADP + phosphate + 5 H(+)(out). In terms of biological role, produces ATP from ADP in the presence of a proton gradient across the membrane. The alpha chain is a regulatory subunit. The sequence is that of ATP synthase subunit alpha, chloroplastic from Selaginella uncinata (Blue spike-moss).